Consider the following 259-residue polypeptide: MELEQREGTMAAVGFEEFSAPPGSELALPPLFGGHILESELETEVEFVSGGLGDSGLRERDEEEEAARGRRRRQRELNRRKYQALGRRCREIEQVNERVLNRLHQVQRITRRLQQERRFLMRVLDSYGDDYRDSQFTIVLEDDGSQGTDVPTPGNAENEPPEKEGLSPSQRTTATLDPTSPAPGEGPSGRKRRRAPRVGASLTPELAPVQVGAEGWGQGVIKVEEDFGFEADEALDSSWVSREPDKLLPYPTLASPPFD.

2 disordered regions span residues 50 to 72 (GGLG…GRRR) and 141 to 210 (EDDG…APVQ). The residue at position 167 (serine 167) is a Phosphoserine. The segment covering 167–178 (SPSQRTTATLDP) has biased composition (polar residues). Position 172 is a phosphothreonine (threonine 172). A phosphoserine mark is found at serine 180 and serine 188. Threonine 203 bears the Phosphothreonine mark. Lysine 222 participates in a covalent cross-link: Glycyl lysine isopeptide (Lys-Gly) (interchain with G-Cter in SUMO2). Position 255 is a phosphoserine (serine 255).

In terms of assembly, interacts with NOL3; translocates NOL3 into the nucleus and negatively regulated TFPT-induced cell death. Component of the chromatin remodeling INO80 complex; specifically part of a complex module associated with the N-terminus of INO80.

The protein resides in the nucleus. Appears to promote apoptosis in a p53/TP53-independent manner. In terms of biological role, putative regulatory component of the chromatin remodeling INO80 complex which is involved in transcriptional regulation, DNA replication and probably DNA repair. This Mus musculus (Mouse) protein is TCF3 fusion partner homolog (Tfpt).